The sequence spans 525 residues: GMP synthase [glutamine-hydrolyzing] (525 aa).

Residues 9–207 form the Glutamine amidotransferase type-1 domain; sequence RILILDFGSQ…VQDICGCEAL (199 aa). Cysteine 86 (nucleophile) is an active-site residue. Catalysis depends on residues histidine 181 and glutamate 183. The GMPS ATP-PPase domain occupies 208 to 400; the sequence is WTPSNIVEDA…LGLPYDMVYR (193 aa). Position 235 to 241 (235 to 241) interacts with ATP; that stretch reads SGGVDSS.

Homodimer.

It carries out the reaction XMP + L-glutamine + ATP + H2O = GMP + L-glutamate + AMP + diphosphate + 2 H(+). Its pathway is purine metabolism; GMP biosynthesis; GMP from XMP (L-Gln route): step 1/1. Catalyzes the synthesis of GMP from XMP. The protein is GMP synthase [glutamine-hydrolyzing] of Pseudomonas putida (strain W619).